The chain runs to 348 residues: Phenylalanine--tRNA ligase alpha subunit (348 aa).

Glutamate 268 serves as a coordination point for Mg(2+).

This sequence belongs to the class-II aminoacyl-tRNA synthetase family. Phe-tRNA synthetase alpha subunit type 1 subfamily. In terms of assembly, tetramer of two alpha and two beta subunits. It depends on Mg(2+) as a cofactor.

The protein resides in the cytoplasm. The enzyme catalyses tRNA(Phe) + L-phenylalanine + ATP = L-phenylalanyl-tRNA(Phe) + AMP + diphosphate + H(+). The chain is Phenylalanine--tRNA ligase alpha subunit from Bordetella parapertussis (strain 12822 / ATCC BAA-587 / NCTC 13253).